The primary structure comprises 795 residues: ATP-dependent RNA helicase DHX15 (795 aa).

Residues 1–111 form a disordered region; it reads MSKRHRLDLG…HTGHTGHTSL (111 aa). Position 15 is a phosphoserine (Ser15). The span at 20-62 shows a compositional bias: basic and acidic residues; the sequence is AGTDGKDRERDRDREDRSKDRDRERDRGDREREREKEKEKELR. Residues 79–110 show a composition bias toward low complexity; that stretch reads ASHSAHSTHSAHSTHSTHSAHSTHTGHTGHTS. The Helicase ATP-binding domain maps to 147–313; the sequence is TDILVRHQSF…FDNCPLLTIP (167 aa). 160-167 serves as a coordination point for ATP; it reads GETGSGKT. The DEAH box motif lies at 260–263; the sequence is DEAH. The region spanning 338–518 is the Helicase C-terminal domain; the sequence is TVIQIHMCEE…SVVLQLKKLG (181 aa). Lys488 carries the post-translational modification N6-acetyllysine. Lys786 is covalently cross-linked (Glycyl lysine isopeptide (Lys-Gly) (interchain with G-Cter in SUMO2)).

The protein belongs to the DEAD box helicase family. DEAH subfamily. DDX15/PRP43 sub-subfamily. In terms of assembly, component of the U11/U12 snRNPs that are part of the U12-type spliceosome. Identified in the Intron Large spliceosome complex (IL, also named intron lariat spliceosome), a post-mRNA release spliceosomal complex containing the excised intron, U2, U5 and U6 snRNPs, and splicing factors; the association may be transient. The IL complex exists in two distinct conformations, one with the DHX15 (ILS2) and one without (ILS1). Interacts with TFIP11 (via G-patch domain); indicative for a recruitment to the IL complex. Interacts with SSB/La. Interacts with GPATCH2 (via G-patch domain); promoting the RNA helicase activity. Interacts with NKRF (via G-patch domain); promoting the RNA helicase activity. Interacts with NLRP6. Ubiquitous.

The protein resides in the nucleus. Its subcellular location is the nucleolus. It catalyses the reaction ATP + H2O = ADP + phosphate + H(+). Its activity is regulated as follows. ATPase activity is enhanced upon binding to G-patch domain-containing proteins. G-patch domain-containing proteins act like a brace that tethers mobile sections of DHX15 together, stabilizing a functional conformation with high RNA affinity, thereby promoting the ATPase activity. In terms of biological role, RNA helicase involved in mRNA processing and antiviral innate immunity. Pre-mRNA processing factor involved in disassembly of spliceosomes after the release of mature mRNA. In cooperation with TFIP11 seem to be involved in the transition of the U2, U5 and U6 snRNP-containing IL complex to the snRNP-free IS complex leading to efficient debranching and turnover of excised introns. Plays a key role in antiviral innate immunity by promoting both MAVS-dependent signaling and NLRP6 inflammasome. Acts as an RNA virus sensor: recognizes and binds viral double stranded RNA (dsRNA) and activates the MAVS-dependent signaling to produce interferon-beta and interferon lambda-3 (IFNL3). Involved in intestinal antiviral innate immunity together with NLRP6: recognizes and binds viral dsRNA and promotes activation of the NLRP6 inflammasome in intestinal epithelial cells to restrict infection by enteric viruses. The NLRP6 inflammasome acts by promoting maturation and secretion of IL18 in the extracellular milieu. Also involved in antibacterial innate immunity by promoting Wnt-induced antimicrobial protein expression in Paneth cells. The sequence is that of ATP-dependent RNA helicase DHX15 from Mus musculus (Mouse).